The following is a 132-amino-acid chain: Small ribosomal subunit protein uS11 (132 aa).

It belongs to the universal ribosomal protein uS11 family. In terms of assembly, part of the 30S ribosomal subunit. Interacts with proteins S7 and S18. Binds to IF-3.

In terms of biological role, located on the platform of the 30S subunit, it bridges several disparate RNA helices of the 16S rRNA. Forms part of the Shine-Dalgarno cleft in the 70S ribosome. This Chlamydia felis (strain Fe/C-56) (Chlamydophila felis) protein is Small ribosomal subunit protein uS11.